We begin with the raw amino-acid sequence, 113 residues long: uncharacterized protein (113 aa).

2 helical membrane passes run 25-45 and 49-69; these read FGFC…CFII and FEVE…LSVW.

The protein resides in the host membrane. This is an uncharacterized protein from Spiroplasma citri (SpV1).